The primary structure comprises 470 residues: Methylenetetrahydrofolate--tRNA-(uracil-5-)-methyltransferase TrmFO (470 aa).

FAD is bound at residue 10–15 (GAGLAG).

It belongs to the MnmG family. TrmFO subfamily. The cofactor is FAD.

It localises to the cytoplasm. It catalyses the reaction uridine(54) in tRNA + (6R)-5,10-methylene-5,6,7,8-tetrahydrofolate + NADH + H(+) = 5-methyluridine(54) in tRNA + (6S)-5,6,7,8-tetrahydrofolate + NAD(+). The enzyme catalyses uridine(54) in tRNA + (6R)-5,10-methylene-5,6,7,8-tetrahydrofolate + NADPH + H(+) = 5-methyluridine(54) in tRNA + (6S)-5,6,7,8-tetrahydrofolate + NADP(+). Functionally, catalyzes the folate-dependent formation of 5-methyl-uridine at position 54 (M-5-U54) in all tRNAs. This chain is Methylenetetrahydrofolate--tRNA-(uracil-5-)-methyltransferase TrmFO, found in Prochlorococcus marinus (strain MIT 9215).